The primary structure comprises 106 residues: L-rhamnose mutarotase (106 aa).

Y20 is a binding site for substrate. Residue H24 is the Proton donor of the active site. Residues Y43 and 78–79 contribute to the substrate site; that span reads WW.

The protein belongs to the rhamnose mutarotase family. In terms of assembly, homodimer.

The protein localises to the cytoplasm. It catalyses the reaction alpha-L-rhamnose = beta-L-rhamnose. The protein operates within carbohydrate metabolism; L-rhamnose metabolism. Functionally, involved in the anomeric conversion of L-rhamnose. The chain is L-rhamnose mutarotase from Brucella anthropi (strain ATCC 49188 / DSM 6882 / CCUG 24695 / JCM 21032 / LMG 3331 / NBRC 15819 / NCTC 12168 / Alc 37) (Ochrobactrum anthropi).